Here is a 503-residue protein sequence, read N- to C-terminus: Maturase K (503 aa).

The protein belongs to the intron maturase 2 family. MatK subfamily.

The protein localises to the plastid. The protein resides in the chloroplast. In terms of biological role, usually encoded in the trnK tRNA gene intron. Probably assists in splicing its own and other chloroplast group II introns. The protein is Maturase K of Kunzea pulchella (Red kunzea).